The chain runs to 240 residues: Ribonuclease 3 (240 aa).

The RNase III domain occupies 13–143 (DHASLLEALG…LLGAVHLQHG (131 aa)). Residue E53 coordinates Mg(2+). Residue D57 is part of the active site. Residues D129 and E132 each coordinate Mg(2+). E132 is an active-site residue. The DRBM domain maps to 170–238 (DWKTSLQELT…AGAAYQALTA (69 aa)).

It belongs to the ribonuclease III family. Homodimer. Mg(2+) is required as a cofactor.

It is found in the cytoplasm. The catalysed reaction is Endonucleolytic cleavage to 5'-phosphomonoester.. Digests double-stranded RNA. Involved in the processing of primary rRNA transcript to yield the immediate precursors to the large and small rRNAs (23S and 16S). Processes some mRNAs, and tRNAs when they are encoded in the rRNA operon. Processes pre-crRNA and tracrRNA of type II CRISPR loci if present in the organism. The protein is Ribonuclease 3 of Nocardia farcinica (strain IFM 10152).